Reading from the N-terminus, the 449-residue chain is Phosphoglucosamine mutase (449 aa).

The active-site Phosphoserine intermediate is Ser-101. 4 residues coordinate Mg(2+): Ser-101, Asp-243, Asp-245, and Asp-247. Ser-101 carries the post-translational modification Phosphoserine.

Belongs to the phosphohexose mutase family. Mg(2+) serves as cofactor. Post-translationally, activated by phosphorylation.

It catalyses the reaction alpha-D-glucosamine 1-phosphate = D-glucosamine 6-phosphate. Catalyzes the conversion of glucosamine-6-phosphate to glucosamine-1-phosphate. This is Phosphoglucosamine mutase from Syntrophus aciditrophicus (strain SB).